Reading from the N-terminus, the 651-residue chain is DNA mismatch repair protein MutL (651 aa).

The tract at residues 383–405 is disordered; it reads TAAEEPTPAPTSPDLEIGDLDDQ.

This sequence belongs to the DNA mismatch repair MutL/HexB family.

In terms of biological role, this protein is involved in the repair of mismatches in DNA. It is required for dam-dependent methyl-directed DNA mismatch repair. May act as a 'molecular matchmaker', a protein that promotes the formation of a stable complex between two or more DNA-binding proteins in an ATP-dependent manner without itself being part of a final effector complex. This is DNA mismatch repair protein MutL from Lacticaseibacillus paracasei (strain ATCC 334 / BCRC 17002 / CCUG 31169 / CIP 107868 / KCTC 3260 / NRRL B-441) (Lactobacillus paracasei).